The sequence spans 240 residues: MGQKVNPIGMRLQVNRTWDSRWYADDKDYGNLLLEDLKIRDFIKKEAKQAGVSRVVIERPHKKCRVTIYAARPGVIIGKKGADIETLRKKLANFTGSELHLNIVEVRKPELDAQLVAESIAQQLERRVSFRRAMKRAVQNAMRMGALGIRVNVSGRLGGAEIARTEWYREGRVPLHTLRADIDYALSEASTPYGIIGVKVWIFKGEIMEHDPQARDRRATEAQDGPSPRGPRRDRDRDAR.

Positions I39–R107 constitute a KH type-2 domain. Basic and acidic residues-rich tracts occupy residues P212–E221 and P231–R240. The disordered stretch occupies residues P212–R240.

It belongs to the universal ribosomal protein uS3 family. Part of the 30S ribosomal subunit. Forms a tight complex with proteins S10 and S14.

In terms of biological role, binds the lower part of the 30S subunit head. Binds mRNA in the 70S ribosome, positioning it for translation. This chain is Small ribosomal subunit protein uS3, found in Paracoccus denitrificans (strain Pd 1222).